Reading from the N-terminus, the 212-residue chain is External core antigen (212 aa).

The signal sequence occupies residues 1-19 (MQLFHLCLIISCTCPTVQA). Positions 25–27 (GWL) are HBEAG. Positions 165–212 (NAPILSTLPETTVVRRRGRSPRRRTPSPRRRRSQSPRRRRSQSRESQC) are disordered. Basic residues predominate over residues 178–205 (VRRRGRSPRRRTPSPRRRRSQSPRRRRS). The stretch at 184 to 190 (SPRRRTP) is one 1; half-length repeat. Residues 184–206 (SPRRRTPSPRRRRSQSPRRRRSQ) form a 3 X 8 AA repeats of S-P-R-R-R-R-S-Q region. The propeptide occupies 184–212 (SPRRRTPSPRRRRSQSPRRRRSQSRESQC). A run of 2 repeats spans residues 191-198 (SPRRRRSQ) and 199-206 (SPRRRRSQ).

Belongs to the orthohepadnavirus precore antigen family. As to quaternary structure, homodimerizes. Post-translationally, phosphorylated. Cleaved by host furin.

It localises to the secreted. The protein localises to the host nucleus. Functionally, may regulate immune response to the intracellular capsid in acting as a T-cell tolerogen, by having an immunoregulatory effect which prevents destruction of infected cells by cytotoxic T-cells. This immune regulation may predispose to chronicity during perinatal infections and prevent severe liver injury during adult infections. The protein is External core antigen of Hepatitis B virus genotype D subtype ayw (isolate Italy/CI/1992) (HBV-D).